A 124-amino-acid chain; its full sequence is uncharacterized protein (124 aa).

Residues Asp-42 to Ile-118 enclose the GIY-YIG domain.

This is an uncharacterized protein from Bacillus subtilis (strain 168).